We begin with the raw amino-acid sequence, 109 residues long: Peptide chaperone MftB (109 aa).

Belongs to the peptide chaperone MftB family. As to quaternary structure, interacts with MftA and MftC.

Its function is as follows. Peptide chaperone involved in the biosynthesis of the enzyme cofactor mycofactocin (MFT). Binds MftA and MftC with high affinity, and is essential for MftC activity on MftA, likely via the formation of a ternary complex. The polypeptide is Peptide chaperone MftB (Mycobacterium ulcerans (strain Agy99)).